A 402-amino-acid polypeptide reads, in one-letter code: Nicotinate phosphoribosyltransferase (402 aa).

H226 carries the post-translational modification Phosphohistidine; by autocatalysis.

Belongs to the NAPRTase family. Transiently phosphorylated on a His residue during the reaction cycle. Phosphorylation strongly increases the affinity for substrates and increases the rate of nicotinate D-ribonucleotide production. Dephosphorylation regenerates the low-affinity form of the enzyme, leading to product release.

The catalysed reaction is nicotinate + 5-phospho-alpha-D-ribose 1-diphosphate + ATP + H2O = nicotinate beta-D-ribonucleotide + ADP + phosphate + diphosphate. It functions in the pathway cofactor biosynthesis; NAD(+) biosynthesis; nicotinate D-ribonucleotide from nicotinate: step 1/1. In terms of biological role, catalyzes the synthesis of beta-nicotinate D-ribonucleotide from nicotinate and 5-phospho-D-ribose 1-phosphate at the expense of ATP. The polypeptide is Nicotinate phosphoribosyltransferase (Chromobacterium violaceum (strain ATCC 12472 / DSM 30191 / JCM 1249 / CCUG 213 / NBRC 12614 / NCIMB 9131 / NCTC 9757 / MK)).